A 557-amino-acid polypeptide reads, in one-letter code: Anti-Muellerian hormone type-2 receptor (557 aa).

The signal sequence occupies residues 1 to 17 (MLGTLGLWTLLPAAAQV). Residues 18 to 144 (SPNRRTCVFF…QEPQATPGGP (127 aa)) are Extracellular-facing. 2 disulfides stabilise this stretch: cysteine 55–cysteine 79 and cysteine 92–cysteine 109. Asparagine 66 carries N-linked (GlcNAc...) asparagine glycosylation. A glycan (N-linked (GlcNAc...) asparagine) is linked at asparagine 119. The helical transmembrane segment at 145–165 (IWMAQLLLGVFLVLLLSIIIL) threads the bilayer. Residues 166-557 (ALLQRKACRV…SVQQGSGSKS (392 aa)) are Cytoplasmic-facing. A Protein kinase domain is found at 201 to 511 (LRFSQVIQEG…RLAALAYPQV (311 aa)). ATP-binding positions include 207-215 (IQEGGHAVV) and lysine 228. Aspartate 331 functions as the Proton acceptor in the catalytic mechanism.

Belongs to the protein kinase superfamily. TKL Ser/Thr protein kinase family. TGFB receptor subfamily. As to quaternary structure, interacts with type I receptor ACVR1. It depends on Mg(2+) as a cofactor. The cofactor is Mn(2+).

The protein localises to the membrane. It catalyses the reaction L-threonyl-[receptor-protein] + ATP = O-phospho-L-threonyl-[receptor-protein] + ADP + H(+). The enzyme catalyses L-seryl-[receptor-protein] + ATP = O-phospho-L-seryl-[receptor-protein] + ADP + H(+). Functionally, on ligand binding, forms a receptor complex consisting of two type II and two type I transmembrane serine/threonine kinases. Type II receptors phosphorylate and activate type I receptors which autophosphorylate, then bind and activate SMAD transcriptional regulators. Receptor for anti-Muellerian hormone. The sequence is that of Anti-Muellerian hormone type-2 receptor (Amhr2) from Rattus norvegicus (Rat).